The sequence spans 171 residues: Protein-export protein SecB (171 aa).

The protein belongs to the SecB family. Homotetramer, a dimer of dimers. One homotetramer interacts with 1 SecA dimer.

The protein resides in the cytoplasm. Functionally, one of the proteins required for the normal export of preproteins out of the cell cytoplasm. It is a molecular chaperone that binds to a subset of precursor proteins, maintaining them in a translocation-competent state. It also specifically binds to its receptor SecA. In Histophilus somni (strain 2336) (Haemophilus somnus), this protein is Protein-export protein SecB.